Here is a 233-residue protein sequence, read N- to C-terminus: Large ribosomal subunit protein uL1 (233 aa).

The protein belongs to the universal ribosomal protein uL1 family. Part of the 50S ribosomal subunit.

Functionally, binds directly to 23S rRNA. The L1 stalk is quite mobile in the ribosome, and is involved in E site tRNA release. In terms of biological role, protein L1 is also a translational repressor protein, it controls the translation of the L11 operon by binding to its mRNA. The sequence is that of Large ribosomal subunit protein uL1 from Campylobacter jejuni subsp. doylei (strain ATCC BAA-1458 / RM4099 / 269.97).